The sequence spans 450 residues: MSLRLSSASRRSCPRPTTGSLRLSGGGTSFGTGNSCGISGIGSGFSCAFGGSSLGGNTAGGNPCAGFTVNERGLLSGNEKVTMQNLNDRLASYLDSVHALEEANADLEQKIKGWYEKFGPGSCRGLDHDYSRYFPIIDDLKNQIIASTTSNANAVLQIDNARLTADDFRLKYENELALHQSVEADVNGLRRVLDEITLCRTDLEIQYETLSEEMTYLKKNHKEEMQVLQCAAGGNVNVEMNAAPGVDLTVLLNNMRAEYEALAEQNRRDAEAWFNEKSASLQQQISEDVGATTSARNELTEMKRTLQTLEIELQSLLATKHSLECSLTETESNYCAQLAQIQAQIGALEEQLHQVRTETEGQKLEYEQLLDIKLHLEKEIETYCLLIGGDDGACKSGGYKSKDYGSGNVGSQVKDSAKAIVVKKVLEEVDQRSKILTTRLRSLEEKSQSN.

Residues 1–23 show a composition bias toward low complexity; it reads MSLRLSSASRRSCPRPTTGSLRL. The interval 1–26 is disordered; the sequence is MSLRLSSASRRSCPRPTTGSLRLSGG. A head region spans residues 1–78; it reads MSLRLSSASR…VNERGLLSGN (78 aa). The segment at 79 to 114 is coil 1A; that stretch reads EKVTMQNLNDRLASYLDSVHALEEANADLEQKIKGW. The IF rod domain occupies 79-394; sequence EKVTMQNLND…LLIGGDDGAC (316 aa). Residues 115–136 are linker 1; that stretch reads YEKFGPGSCRGLDHDYSRYFPI. The coil 1B stretch occupies residues 137-228; sequence IDDLKNQIIA…KNHKEEMQVL (92 aa). A linker 12 region spans residues 229–251; it reads QCAAGGNVNVEMNAAPGVDLTVL. The segment at 252–390 is coil 2; it reads LNNMRAEYEA…ETYCLLIGGD (139 aa). Residues 391–450 are tail; sequence DGACKSGGYKSKDYGSGNVGSQVKDSAKAIVVKKVLEEVDQRSKILTTRLRSLEEKSQSN. Phosphoserine is present on S442.

This sequence belongs to the intermediate filament family. Heterodimer of a type I and a type II keratin. Heterodimer with type II keratin KRT5 leading to the formation of keratin intermediate filament (KIF) network. Interacts with KRT6A to form filaments.

The protein localises to the cytoplasm. Its function is as follows. Essential for the proper assembly of type I and type II keratin protein complexes and formation of keratin intermediate filaments in the inner root sheath (irs). Plays a role in the cytoskeleton organization. In Pan troglodytes (Chimpanzee), this protein is Keratin, type I cytoskeletal 25 (KRT25).